The chain runs to 860 residues: Leucine--tRNA ligase (860 aa).

A 'HIGH' region motif is present at residues 42 to 52 (PYPSGRLHMGH). Residues 619–623 (KMSKS) carry the 'KMSKS' region motif. Residue Lys-622 coordinates ATP.

It belongs to the class-I aminoacyl-tRNA synthetase family.

The protein localises to the cytoplasm. It catalyses the reaction tRNA(Leu) + L-leucine + ATP = L-leucyl-tRNA(Leu) + AMP + diphosphate. This chain is Leucine--tRNA ligase, found in Escherichia coli O7:K1 (strain IAI39 / ExPEC).